Here is a 193-residue protein sequence, read N- to C-terminus: dCTP deaminase (193 aa).

Residues 110–115 (RSSLAR), Asp-128, 136–138 (VLE), Tyr-171, Lys-178, and Gln-182 contribute to the dCTP site. The active-site Proton donor/acceptor is Glu-138.

It belongs to the dCTP deaminase family. As to quaternary structure, homotrimer.

The enzyme catalyses dCTP + H2O + H(+) = dUTP + NH4(+). It participates in pyrimidine metabolism; dUMP biosynthesis; dUMP from dCTP (dUTP route): step 1/2. Functionally, catalyzes the deamination of dCTP to dUTP. The polypeptide is dCTP deaminase (Aeromonas salmonicida (strain A449)).